The following is a 255-amino-acid chain: tRNA (guanine-N(1)-)-methyltransferase (255 aa).

Residues Gly113 and 133–138 (IGDYVL) each bind S-adenosyl-L-methionine.

Belongs to the RNA methyltransferase TrmD family. As to quaternary structure, homodimer.

The protein resides in the cytoplasm. It catalyses the reaction guanosine(37) in tRNA + S-adenosyl-L-methionine = N(1)-methylguanosine(37) in tRNA + S-adenosyl-L-homocysteine + H(+). In terms of biological role, specifically methylates guanosine-37 in various tRNAs. This chain is tRNA (guanine-N(1)-)-methyltransferase, found in Mannheimia succiniciproducens (strain KCTC 0769BP / MBEL55E).